The following is a 1359-amino-acid chain: ABC transporter C family member 1 (1359 aa).

The region spanning 111 to 394 is the ABC transmembrane type-1 1 domain; the sequence is NKLTIFLQIL…LPNSIQQLQS (284 aa). The next 6 membrane-spanning stretches (helical) occupy residues 119 to 139, 147 to 167, 214 to 234, 244 to 264, 332 to 352, and 363 to 383; these read ILTN…IQFI, SFLA…SYTF, LLSV…MGIF, LALL…IMVI, MIFW…VLVL, and ITLE…IPLL. The interval 409–478 is disordered; it reads PEIQQNHSSN…QQQQQQQQQQ (70 aa). Residues 420–433 are compositionally biased toward acidic residues; that stretch reads EEEEEDEYDDDINS. The span at 440–450 shows a compositional bias: polar residues; it reads HNGSFNWNQVD. A compositionally biased stretch (low complexity) spans 459–478; sequence GNQQQQQQQQQQQQQQQQQQ. Positions 470–690 constitute an ABC transporter 1 domain; the sequence is QQQQQQQQQQ…IDFESIMKTK (221 aa). 502-509 is a binding site for ATP; the sequence is GVVGSGKT. Positions 763–1061 constitute an ABC transmembrane type-1 2 domain; it reads LRVYKEYFKH…LEVKMNSVER (299 aa). 5 helical membrane-spanning segments follow: residues 773–793, 819–839, 884–904, 906–926, and 999–1021; these read GSSI…QIIY, IYLL…FMMA, VDLL…TVLV, IGIM…LIGI, and WVAV…FSLF. Residues 1073–1102 are a coiled coil; it reads NSKINFFRNEQQEEEEEEEEEFDFDNDDYD. The ABC transporter 2 domain maps to 1116–1350; it reads IEFRNVEIKY…QESRFSKLVK (235 aa). Residue 1150 to 1157 coordinates ATP; sequence GRTGAGKS.

This sequence belongs to the ABC transporter superfamily. ABCC family. Conjugate transporter (TC 3.A.1.208) subfamily.

The protein localises to the membrane. This is ABC transporter C family member 1 (abcC1) from Dictyostelium discoideum (Social amoeba).